The following is a 464-amino-acid chain: UDP-N-acetylmuramate--L-alanine ligase (464 aa).

115-121 (GSHGKTT) contacts ATP.

Belongs to the MurCDEF family.

The protein localises to the cytoplasm. The catalysed reaction is UDP-N-acetyl-alpha-D-muramate + L-alanine + ATP = UDP-N-acetyl-alpha-D-muramoyl-L-alanine + ADP + phosphate + H(+). It functions in the pathway cell wall biogenesis; peptidoglycan biosynthesis. In terms of biological role, cell wall formation. The chain is UDP-N-acetylmuramate--L-alanine ligase from Pelagibacter ubique (strain HTCC1062).